Consider the following 1076-residue polypeptide: Bifunctional glutamine synthetase adenylyltransferase/adenylyl-removing enzyme (1076 aa).

The tract at residues 1-521 (MESSIFKPSS…LHLDIYYRPM (521 aa)) is adenylyl removase. The interval 524–1076 (VNAQMENDQI…LERNRRRAQR (553 aa)) is adenylyl transferase. A compositionally biased stretch (low complexity) spans 1042 to 1056 (TATASAATQQPQTAP). Residues 1042 to 1076 (TATASAATQQPQTAPRPRMHVIAPRLERNRRRAQR) form a disordered region.

The protein belongs to the GlnE family. It depends on Mg(2+) as a cofactor.

The catalysed reaction is [glutamine synthetase]-O(4)-(5'-adenylyl)-L-tyrosine + phosphate = [glutamine synthetase]-L-tyrosine + ADP. It catalyses the reaction [glutamine synthetase]-L-tyrosine + ATP = [glutamine synthetase]-O(4)-(5'-adenylyl)-L-tyrosine + diphosphate. Its function is as follows. Involved in the regulation of glutamine synthetase GlnA, a key enzyme in the process to assimilate ammonia. When cellular nitrogen levels are high, the C-terminal adenylyl transferase (AT) inactivates GlnA by covalent transfer of an adenylyl group from ATP to specific tyrosine residue of GlnA, thus reducing its activity. Conversely, when nitrogen levels are low, the N-terminal adenylyl removase (AR) activates GlnA by removing the adenylyl group by phosphorolysis, increasing its activity. The regulatory region of GlnE binds the signal transduction protein PII (GlnB) which indicates the nitrogen status of the cell. The sequence is that of Bifunctional glutamine synthetase adenylyltransferase/adenylyl-removing enzyme from Bifidobacterium longum (strain DJO10A).